The following is a 311-amino-acid chain: Methionyl-tRNA formyltransferase (311 aa).

112–115 (SLLP) serves as a coordination point for (6S)-5,6,7,8-tetrahydrofolate.

The protein belongs to the Fmt family.

It carries out the reaction L-methionyl-tRNA(fMet) + (6R)-10-formyltetrahydrofolate = N-formyl-L-methionyl-tRNA(fMet) + (6S)-5,6,7,8-tetrahydrofolate + H(+). In terms of biological role, attaches a formyl group to the free amino group of methionyl-tRNA(fMet). The formyl group appears to play a dual role in the initiator identity of N-formylmethionyl-tRNA by promoting its recognition by IF2 and preventing the misappropriation of this tRNA by the elongation apparatus. In Bradyrhizobium sp. (strain ORS 278), this protein is Methionyl-tRNA formyltransferase.